Here is a 295-residue protein sequence, read N- to C-terminus: 4-hydroxybenzoate octaprenyltransferase (295 aa).

The next 8 membrane-spanning stretches (helical) occupy residues 28–48, 51–71, 101–121, 124–144, 159–179, 220–240, 242–262, and 274–294; these read AGWL…AGGF, WHLL…GCCV, ALGV…TTNA, IAWS…KRFV, IPMA…WLVL, VMAF…PFGL, WPLH…WRLI, and FTGN…GFAL.

The protein belongs to the UbiA prenyltransferase family. It depends on Mg(2+) as a cofactor.

It is found in the cell inner membrane. It carries out the reaction all-trans-octaprenyl diphosphate + 4-hydroxybenzoate = 4-hydroxy-3-(all-trans-octaprenyl)benzoate + diphosphate. Its pathway is cofactor biosynthesis; ubiquinone biosynthesis. Its function is as follows. Catalyzes the prenylation of para-hydroxybenzoate (PHB) with an all-trans polyprenyl group. Mediates the second step in the final reaction sequence of ubiquinone-8 (UQ-8) biosynthesis, which is the condensation of the polyisoprenoid side chain with PHB, generating the first membrane-bound Q intermediate 3-octaprenyl-4-hydroxybenzoate. The protein is 4-hydroxybenzoate octaprenyltransferase of Paracidovorax citrulli (strain AAC00-1) (Acidovorax citrulli).